Consider the following 148-residue polypeptide: MRKLDKVDIQLVKILSQNSRLTYRELAELMNTTRQRIARRITKLKKLGVIKKFTIIPDLDKLGYMYAFVLVKLRVPSEVDAMISEISNVEYVKEIEKGVGRYNLIVRLLLPKDLKEAEGIINEFLQKIKNAESVEVVLISEIKKFEII.

An HTH asnC-type domain is found at leucine 4–methionine 65. The H-T-H motif DNA-binding region spans tyrosine 23–threonine 42.

This is an uncharacterized protein from Pyrococcus abyssi (strain GE5 / Orsay).